We begin with the raw amino-acid sequence, 1498 residues long: DNA-directed RNA polymerase subunit beta' (1498 aa).

4 residues coordinate Zn(2+): C67, C69, C82, and C85. Residues D499, D501, and D503 each coordinate Mg(2+). 4 residues coordinate Zn(2+): C867, C943, C950, and C953.

It belongs to the RNA polymerase beta' chain family. In terms of assembly, the RNAP catalytic core consists of 2 alpha, 1 beta, 1 beta' and 1 omega subunit. When a sigma factor is associated with the core the holoenzyme is formed, which can initiate transcription. It depends on Mg(2+) as a cofactor. Zn(2+) is required as a cofactor.

The enzyme catalyses RNA(n) + a ribonucleoside 5'-triphosphate = RNA(n+1) + diphosphate. In terms of biological role, DNA-dependent RNA polymerase catalyzes the transcription of DNA into RNA using the four ribonucleoside triphosphates as substrates. This chain is DNA-directed RNA polymerase subunit beta', found in Chlorobium phaeobacteroides (strain BS1).